The chain runs to 257 residues: UPF0246 protein Mmc1_3117 (257 aa).

The protein belongs to the UPF0246 family.

This chain is UPF0246 protein Mmc1_3117, found in Magnetococcus marinus (strain ATCC BAA-1437 / JCM 17883 / MC-1).